Here is a 228-residue protein sequence, read N- to C-terminus: Probable septum site-determining protein MinC (228 aa).

This sequence belongs to the MinC family. In terms of assembly, interacts with MinD and FtsZ.

Its function is as follows. Cell division inhibitor that blocks the formation of polar Z ring septums. Rapidly oscillates between the poles of the cell to destabilize FtsZ filaments that have formed before they mature into polar Z rings. Prevents FtsZ polymerization. The sequence is that of Probable septum site-determining protein MinC from Oceanobacillus iheyensis (strain DSM 14371 / CIP 107618 / JCM 11309 / KCTC 3954 / HTE831).